The following is a 926-amino-acid chain: Protein translocase subunit SecA (926 aa).

Residues Gln-87, 105-109 (GEGKT), and Asp-512 contribute to the ATP site. Residues Cys-911, Cys-913, Cys-922, and His-923 each contribute to the Zn(2+) site.

The protein belongs to the SecA family. Monomer and homodimer. Part of the essential Sec protein translocation apparatus which comprises SecA, SecYEG and auxiliary proteins SecDF-YajC and YidC. Requires Zn(2+) as cofactor.

The protein localises to the cell inner membrane. It is found in the cytoplasm. It carries out the reaction ATP + H2O + cellular proteinSide 1 = ADP + phosphate + cellular proteinSide 2.. Part of the Sec protein translocase complex. Interacts with the SecYEG preprotein conducting channel. Has a central role in coupling the hydrolysis of ATP to the transfer of proteins into and across the cell membrane, serving both as a receptor for the preprotein-SecB complex and as an ATP-driven molecular motor driving the stepwise translocation of polypeptide chains across the membrane. This is Protein translocase subunit SecA from Psychrobacter cryohalolentis (strain ATCC BAA-1226 / DSM 17306 / VKM B-2378 / K5).